Here is a 103-residue protein sequence, read N- to C-terminus: Cell division suppressor protein YneA (103 aa).

The region spanning Val-36–Leu-87 is the LysM domain.

The protein belongs to the YneA family.

It localises to the cytoplasm. Inhibits cell division during the SOS response. Affects a later stage of the cell division protein assembly, after the assembly of the Z ring, by probably suppressing recruitment of FtsL and/or DivIC to the division machinery. This chain is Cell division suppressor protein YneA, found in Bacillus velezensis (strain DSM 23117 / BGSC 10A6 / LMG 26770 / FZB42) (Bacillus amyloliquefaciens subsp. plantarum).